Consider the following 377-residue polypeptide: Acetyltransferase ple2 (377 aa).

An N-terminal signal peptide occupies residues 1 to 27; the sequence is MKPFSPELLVLSFILLVLSCAIRPAKG. Helical transmembrane passes span 29–49, 56–76, 176–196, and 258–278; these read WILW…TTGD, IANN…LTDV, IAAW…ALSL, and PALY…HAIG.

Belongs to the wax synthase family.

Its subcellular location is the membrane. Its pathway is secondary metabolite biosynthesis; terpenoid biosynthesis. In terms of biological role, acetyltransferase; part of the gene cluster that mediates the biosynthesis of pleuromutilin, a tricyclic diterpene showing antibacterial properties. The geranylgeranyl diphosphate (GGPP) synthase ple4 catalyzes the first step in pleuromutilin biosynthesis. GGPP is then substrate of the premutilin synthase (PS) ple3 to yield premutilin. Premutilin synthase is a bifunctional enzyme composed of the fusion of a class II diterpene cyclase (DTC) and a class I diterpene synthase (DTS), with the corresponding domains and active sites containing characteristic aspartate-rich motifs. GGPP is first converted to mutildienyl-diphosphate (MPP) at the class II DTC site. MPP is subsequently further cyclized at the class I DTS site, followed by a 1,5-hydride shift and addition of water prior to terminating deprotonation, to yield premutilin. The cytochrome P450 monooxygenases ple5 and ple6 hydroxylate premutilin at C-11 and C-3, respectively, producing 11-hydroxypremutilin and 3-hydroxypremutilin. The combination of the actions of both ple5 and ple6 leads to the production of 3,11-dihydroxypremutilin. The short chain dehydrogenase ple7 further converts 3,11-dihydroxypremutilin into mutilin. The acetyltransferase ple2 then acetylates mutilin to produce 14-O-acetylmutilin. Finally, the cytochrome P450 monooxygenase ple1 catalyzes hydroxylation on the alpha position of the acetyl side chain of 14-O-acetylmutilin to yield pleuromutilin. This Rhodocybe pseudopiperita (Clitopilus pseudopiperitus) protein is Acetyltransferase ple2.